Reading from the N-terminus, the 136-residue chain is MRVIDASGAIYGRLSAYVAKRLLEGEEITIVNASKAVITGNKEFIIEKFKERLDIGSVRKGPYYPKTPENILRRSIGDMLPKKITKGKEALARCRVYRNTPPDIEKEKVEKVDGVVTDKVSGIITLGDLSKELGGY.

This sequence belongs to the universal ribosomal protein uL13 family. In terms of assembly, part of the 50S ribosomal subunit.

Functionally, this protein is one of the early assembly proteins of the 50S ribosomal subunit, although it is not seen to bind rRNA by itself. It is important during the early stages of 50S assembly. This is Large ribosomal subunit protein uL13 from Thermoplasma acidophilum (strain ATCC 25905 / DSM 1728 / JCM 9062 / NBRC 15155 / AMRC-C165).